Consider the following 812-residue polypeptide: MEESDEPEQPISLGRQEYRRRRLPSQPMVDKSQQTEIGEKKKGMAAVQPPAPKATHSIGNIPGGKANYSGKEYESLILSSQLQQTWMKRKQGQEMTDKSFQTDTSVEEKVEVIFMDKALEENSASVGEIAPASPQGVSEVEIPTSRPPSLLIDRAQQTSCTGDWSLISICSKDKVDKEQQTYFSELETTVKSMPGSSLIKSKEETVPIAEDGSLVEIDGSLEIEVLSTEKIPDVVMSFTEGEISGELQAVPDDEATVKAEHFFTEETSIQAPSLAKETSAAETTAKTPKEFVDIQALPADELSSTEPPADIRPPLVKGTLSEEPSDQQYPKGTVVAPSELPVEDLVPLSEEVLEKVQALAIDTILDDSGRAESTTVEEATGEVQPPLSEEITKEVPAEVHLPIATHSKEIVIIIDKEFAIDEDFEDQPPFITEVAEDEATAEVQPPSAEDAPEEVAPSEVLPPPTEQGTVEHMTAEVLSPSTEVGPAEVPPLPTEEWPLPPVTEESPAEVTPPETEEGPIEPAEEGPEDGLLLPTEEIPSEVQPPSLEKVPLEEVVIPQAEEVPLDDLPIEVQPLPAENIAGWVPDEFQAFPVDEYPAREDTVEVQPSSLESAPIEESSVEAQLLAAEADTAEIEETPTEVAPAEDQLLPAEEVVLKVEVATAWSPLSELPPAEEATVEAQLTSVEESLKRTSVDVQPPPLDTLAEESPAVKQPLKTDVVPMPEFPGEEMTAQDPLPPSVKTTVDQDLLKEHQLPEIADISQVKLEYTTFTGDKKSKGTDSVPEDVTGIKDDQISTFKIEGTIKIELKNSTS.

A disordered region spans residues 1 to 66; the sequence is MEESDEPEQP…SIGNIPGGKA (66 aa). 6 positions are modified to phosphoserine: serine 25, serine 57, serine 125, serine 133, serine 184, and serine 273. 4 disordered regions span residues 269–333, 367–388, 424–547, and 672–741; these read IQAP…PKGT, DSGRAESTTVEEATGEVQPPLS, FEDQ…PPSL, and PAEE…PSVK. A compositionally biased stretch (low complexity) spans 275-286; the sequence is AKETSAAETTAK. Residues 488–501 show a composition bias toward pro residues; that stretch reads EVPPLPTEEWPLPP. Positions 502–513 are enriched in low complexity; sequence VTEESPAEVTPP. Residues 514–528 are compositionally biased toward acidic residues; the sequence is ETEEGPIEPAEEGPE.

As to quaternary structure, interacts with CABYR.

It localises to the cell projection. The protein localises to the cilium. The protein resides in the flagellum. Its function is as follows. May be involved in the later stages of fibrous sheath biogenesis. Binds calcium. The chain is Fibrous sheath CABYR-binding protein from Rattus norvegicus (Rat).